The following is a 141-amino-acid chain: Nucleoside triphosphatase NudI (141 aa).

Positions 1-141 (MRQRTIVCPL…RHTLALKGLL (141 aa)) constitute a Nudix hydrolase domain. Positions 38-59 (GGVEPGERIEEALRREIREELG) match the Nudix box motif.

The protein belongs to the Nudix hydrolase family. NudI subfamily. In terms of assembly, monomer. It depends on Mg(2+) as a cofactor.

The enzyme catalyses a ribonucleoside 5'-triphosphate + H2O = a ribonucleoside 5'-phosphate + diphosphate + H(+). It catalyses the reaction a 2'-deoxyribonucleoside 5'-triphosphate + H2O = a 2'-deoxyribonucleoside 5'-phosphate + diphosphate + H(+). The catalysed reaction is dUTP + H2O = dUMP + diphosphate + H(+). It carries out the reaction dTTP + H2O = dTMP + diphosphate + H(+). The enzyme catalyses dCTP + H2O = dCMP + diphosphate + H(+). Functionally, catalyzes the hydrolysis of nucleoside triphosphates, with a preference for pyrimidine deoxynucleoside triphosphates (dUTP, dTTP and dCTP). This Salmonella newport (strain SL254) protein is Nucleoside triphosphatase NudI.